A 454-amino-acid chain; its full sequence is Sensor histidine kinase YkoH (454 aa).

Residues 1-12 lie on the Cytoplasmic side of the membrane; sequence MKLKTKIHLYTS. Residues 13-33 form a helical membrane-spanning segment; that stretch reads ISLLILLILVHTAVYLIFSSA. At 34-153 the chain is on the extracellular side; the sequence is LTSKDAARLA…NTEESLFLLK (120 aa). The helical transmembrane segment at 154–174 threads the bilayer; that stretch reads IILIAASAAVCIASFFAGSLL. The Cytoplasmic segment spans residues 175-454; it reads ARRIINPIRR…QFSEQNGGGR (280 aa). The region spanning 176 to 230 is the HAMP domain; the sequence is RRIINPIRRLMITMKDIQRDKEFKTISLEGQSNDELYQMGLTFNEMAMMLKEHYD. Residues 238–450 enclose the Histidine kinase domain; the sequence is DASHELKTPL…AVTMQFSEQN (213 aa). Residue histidine 241 is modified to Phosphohistidine; by autocatalysis.

Its subcellular location is the cell membrane. The enzyme catalyses ATP + protein L-histidine = ADP + protein N-phospho-L-histidine.. Probable member of the two-component regulatory system YkoH/YkoG. Potentially phosphorylates YkoG. The chain is Sensor histidine kinase YkoH (ykoH) from Bacillus subtilis (strain 168).